Reading from the N-terminus, the 658-residue chain is A-type ATP synthase subunit I (658 aa).

The next 7 membrane-spanning stretches (helical) occupy residues 383–403 (MAFVFPFFFGFCLTDAGYGII), 427–447 (IIMMSCGVWAFILGMVTNGFI), 475–495 (ILIMALTVGVLHINFGLILGA), 507–526 (ALGSQIVWLILELGIILYLV), 530–552 (IFGAPLIILAFAMLLYYNGLFGL), 568–588 (LLALCLSTGGIAMTVNILTGL), and 591–611 (EMIPVIGVVLAPIIFVFGHIA).

This sequence belongs to the V-ATPase 116 kDa subunit family. Has multiple subunits with at least A(3), B(3), C, D, E, F, H, I and proteolipid K(x).

It localises to the cell membrane. Functionally, component of the A-type ATP synthase that produces ATP from ADP in the presence of a proton gradient across the membrane. In Methanothermobacter thermautotrophicus (strain ATCC 29096 / DSM 1053 / JCM 10044 / NBRC 100330 / Delta H) (Methanobacterium thermoautotrophicum), this protein is A-type ATP synthase subunit I.